The sequence spans 230 residues: DNA repair protein RecO (230 aa).

It belongs to the RecO family.

Involved in DNA repair and RecF pathway recombination. This Pseudoalteromonas translucida (strain TAC 125) protein is DNA repair protein RecO.